The sequence spans 27 residues: Secretin (27 aa).

Position 27 is a methionine amide (M27).

Belongs to the glucagon family.

It is found in the secreted. Its function is as follows. Hormone involved in different processes, such as regulation of the pH of the duodenal content, food intake and water homeostasis. Exerts its biological effects by binding to secretin receptor (SCTR), a G-protein coupled receptor expressed in the basolateral domain of several cells. This is Secretin from Gallus gallus (Chicken).